The chain runs to 163 residues: Large ribosomal subunit protein uL15 (163 aa).

Basic residues predominate over residues 1-29 (MSKKRRQRGSRTHGGGSHKNRRGAGHRGG). Disordered regions lie at residues 1 to 59 (MSKK…KTRR) and 135 to 163 (VADG…DEES). 2 stretches are compositionally biased toward basic and acidic residues: residues 33–46 (AGRD…HEPL) and 142–154 (LSER…AEKD).

It belongs to the universal ribosomal protein uL15 family. In terms of assembly, part of the 50S ribosomal subunit.

Functionally, binds to the 23S rRNA. The polypeptide is Large ribosomal subunit protein uL15 (Natronomonas pharaonis (strain ATCC 35678 / DSM 2160 / CIP 103997 / JCM 8858 / NBRC 14720 / NCIMB 2260 / Gabara) (Halobacterium pharaonis)).